Reading from the N-terminus, the 395-residue chain is Putative 8-amino-7-oxononanoate synthase (395 aa).

A substrate-binding site is contributed by arginine 22. 109-110 provides a ligand contact to pyridoxal 5'-phosphate; it reads GY. Histidine 139 provides a ligand contact to substrate. Residues serine 187, 212–215, and 241–244 contribute to the pyridoxal 5'-phosphate site; these read DEAH and TFSK. Residue lysine 244 is modified to N6-(pyridoxal phosphate)lysine. A substrate-binding site is contributed by threonine 358.

It belongs to the class-II pyridoxal-phosphate-dependent aminotransferase family. BioF subfamily. As to quaternary structure, homodimer. The cofactor is pyridoxal 5'-phosphate.

It catalyses the reaction 6-carboxyhexanoyl-[ACP] + L-alanine + H(+) = (8S)-8-amino-7-oxononanoate + holo-[ACP] + CO2. It participates in cofactor biosynthesis; biotin biosynthesis. Functionally, catalyzes the decarboxylative condensation of pimeloyl-[acyl-carrier protein] and L-alanine to produce 8-amino-7-oxononanoate (AON), [acyl-carrier protein], and carbon dioxide. The sequence is that of Putative 8-amino-7-oxononanoate synthase (bioF) from Magnetococcus marinus (strain ATCC BAA-1437 / JCM 17883 / MC-1).